Here is a 334-residue protein sequence, read N- to C-terminus: Fructose-1,6-bisphosphatase class 1 (334 aa).

4 residues coordinate Mg(2+): E92, D114, L116, and D117. Substrate-binding positions include 117–120 and N209; that span reads DGSS. Residue E281 coordinates Mg(2+).

The protein belongs to the FBPase class 1 family. Homotetramer. It depends on Mg(2+) as a cofactor.

It localises to the cytoplasm. It carries out the reaction beta-D-fructose 1,6-bisphosphate + H2O = beta-D-fructose 6-phosphate + phosphate. The protein operates within carbohydrate biosynthesis; gluconeogenesis. This Nitrosomonas eutropha (strain DSM 101675 / C91 / Nm57) protein is Fructose-1,6-bisphosphatase class 1.